The primary structure comprises 396 residues: Tyrosine--tRNA ligase (396 aa).

A 'HIGH' region motif is present at residues 43-52; the sequence is PSSPDIHLGH. The short motif at 227–231 is the 'KMSKS' region element; it reads KMSKS. Lys230 is an ATP binding site. Residues 338–396 form the S4 RNA-binding domain; it reads ICVIDFIIKADLAKSKSEARRLLEQGGVEINSAKISDPGTTVKCGDIIKAGKRRYSKAV.

Belongs to the class-I aminoacyl-tRNA synthetase family. TyrS type 2 subfamily. Homodimer.

The protein localises to the cytoplasm. The enzyme catalyses tRNA(Tyr) + L-tyrosine + ATP = L-tyrosyl-tRNA(Tyr) + AMP + diphosphate + H(+). Its function is as follows. Catalyzes the attachment of tyrosine to tRNA(Tyr) in a two-step reaction: tyrosine is first activated by ATP to form Tyr-AMP and then transferred to the acceptor end of tRNA(Tyr). In Dehalococcoides mccartyi (strain ATCC BAA-2266 / KCTC 15142 / 195) (Dehalococcoides ethenogenes (strain 195)), this protein is Tyrosine--tRNA ligase.